The following is a 137-amino-acid chain: Large-conductance mechanosensitive channel (137 aa).

Transmembrane regions (helical) follow at residues V15–V35, I38–Q58, and G80–V100.

It belongs to the MscL family. In terms of assembly, homopentamer.

The protein resides in the cell inner membrane. Functionally, channel that opens in response to stretch forces in the membrane lipid bilayer. May participate in the regulation of osmotic pressure changes within the cell. This Brucella anthropi (strain ATCC 49188 / DSM 6882 / CCUG 24695 / JCM 21032 / LMG 3331 / NBRC 15819 / NCTC 12168 / Alc 37) (Ochrobactrum anthropi) protein is Large-conductance mechanosensitive channel.